Here is a 111-residue protein sequence, read N- to C-terminus: High mobility group protein Z (111 aa).

Residues 6–72 (PKRPLSAYML…EYNKAVKEYE (67 aa)) constitute a DNA-binding region (HMG box). Ser-11 is subject to Phosphoserine. Residues 72-111 (EANGGTDSGAPKKRKKAAAKPAKKAKKKESSEEEEEDESE) form a disordered region. The span at 82–98 (PKKRKKAAAKPAKKAKK) shows a compositional bias: basic residues. Over residues 102–111 (SEEEEEDESE) the composition is skewed to acidic residues.

Belongs to the HMGB family.

It localises to the nucleus. The protein localises to the chromosome. The polypeptide is High mobility group protein Z (HmgZ) (Drosophila melanogaster (Fruit fly)).